A 968-amino-acid polypeptide reads, in one-letter code: Sorting nexin-13 (968 aa).

Positions 97 to 284 constitute a PXA domain; that stretch reads ANIIDEPLQQ…YVIWMIRDSN (188 aa). The region spanning 373 to 496 is the RGS domain; that stretch reads PLDSILVDNV…RKVYELMLRD (124 aa). In terms of domain architecture, PX spans 570–691; sequence YADYDPYAVA…DFLENKAYSK (122 aa). The a 1,2-diacyl-sn-glycero-3-phospho-(1D-myo-inositol-3-phosphate) site is built by R612, S614, K639, and R653.

It belongs to the sorting nexin family.

It localises to the early endosome membrane. Functionally, may be involved in several stages of intracellular trafficking. May play a role in endosome homeostasis. Acts as a GAP for Galphas. In Homo sapiens (Human), this protein is Sorting nexin-13 (SNX13).